The sequence spans 817 residues: Probable inorganic carbon transporter subunit DabA (817 aa).

The Zn(2+) site is built by Cys-301, Asp-303, His-491, and Cys-506. 2 disordered regions span residues 598–617 and 794–817; these read NTSV…ERRA and GWHA…GVPS.

This sequence belongs to the inorganic carbon transporter (TC 9.A.2) DabA family. In terms of assembly, forms a complex with DabB. The cofactor is Zn(2+).

It localises to the cell inner membrane. Functionally, part of an energy-coupled inorganic carbon pump. The protein is Probable inorganic carbon transporter subunit DabA of Salinibacter ruber (strain DSM 13855 / M31).